The sequence spans 958 residues: Voltage-gated inwardly rectifying potassium channel KCNH6 (958 aa).

Over 1-261 the chain is Cytoplasmic; the sequence is MPVRRGHVAP…YSPFKAVWDW (261 aa). The PAS domain maps to 41–70; the sequence is IIYCNDGFCELFGYSRVEVMQQPCTCDFLT. The PAC domain maps to 92–144; the sequence is CKVDILYYRKDASSFRCLVDVVPVKNEDGAVIMFILNFEDLAQLLAKCSSRSL. Residues 262-282 traverse the membrane as a helical segment; the sequence is LILLLVIYTAVFTPYSAAFLL. Topologically, residues 283–298 are extracellular; sequence SDQDESRRGACSYTCS. Residues 299-319 form a helical membrane-spanning segment; the sequence is PLTVVDLIVDIMFVVDIVINF. Residues 320–340 lie on the Cytoplasmic side of the membrane; that stretch reads RTTYVNTNDEVVSHPRRIAVH. Residues 341 to 361 form a helical membrane-spanning segment; the sequence is YFKGWFLIDMVAAIPFDLLIF. Over 362 to 370 the chain is Extracellular; sequence RTGSDETTT. The chain crosses the membrane as a helical; Voltage-sensor span at residues 371–391; the sequence is LIGLLKTARLLRLVRVARKLD. Residues 392–398 are Cytoplasmic-facing; sequence RYSEYGA. The chain crosses the membrane as a helical span at residues 399–419; it reads AVLFLLMCTFALIAHWLACIW. Residues 420 to 463 are Extracellular-facing; it reads YAIGNVERPYLEHKIGWLDSLGVQLGKRYNGSDPASGPSVQDKY. N-linked (GlcNAc...) (complex) asparagine glycosylation occurs at N449. The pore-forming intramembrane region spans 464–484; it reads VTALYFTFSSLTSVGFGNVSP. A Selectivity filter motif is present at residues 476–481; the sequence is SVGFGN. Over 485–490 the chain is Extracellular; sequence NTNSEK. A helical membrane pass occupies residues 491–511; it reads VFSICVMLIGSLMYASIFGNV. Topologically, residues 512–958 are cytoplasmic; that stretch reads SAIIQRLYSG…DPGFAGSWGH (447 aa). A cNMP-binding domain region spans residues 594–694; it reads AFSGAGKGCL…IQRADLLEVL (101 aa). Disordered stretches follow at residues 720 to 751 and 845 to 910; these read GLHS…PPLS and TTSP…PPLA. Polar residues predominate over residues 724–745; the sequence is SPRQAPGSQDHQGFFLSDNQSD.

The protein belongs to the potassium channel family. H (Eag) (TC 1.A.1.20) subfamily. Kv11.2/KCNH6 sub-subfamily. In terms of assembly, the potassium channel is probably composed of a homo- or heterotetrameric complex of pore-forming alpha subunits that can associate only within their subfamily. As to expression, expressed in prolactin-secreting adenomas.

The protein localises to the cell membrane. The enzyme catalyses K(+)(in) = K(+)(out). Pore-forming (alpha) subunit of voltage-gated inwardly rectifying potassium channel. Characterized by unusual gating kinetics by producing relatively small outward currents during membrane depolarization and large inward currents during subsequent repolarization which reflect a rapid inactivation during depolarization and quick recovery from inactivation but slow deactivation (closing) during repolarization. Activates even more slowly than KCNH2. The protein is Voltage-gated inwardly rectifying potassium channel KCNH6 of Homo sapiens (Human).